The following is a 689-amino-acid chain: Glycine--tRNA ligase beta subunit (689 aa).

Belongs to the class-II aminoacyl-tRNA synthetase family. Tetramer of two alpha and two beta subunits.

It is found in the cytoplasm. It catalyses the reaction tRNA(Gly) + glycine + ATP = glycyl-tRNA(Gly) + AMP + diphosphate. The polypeptide is Glycine--tRNA ligase beta subunit (Lacticaseibacillus paracasei (strain ATCC 334 / BCRC 17002 / CCUG 31169 / CIP 107868 / KCTC 3260 / NRRL B-441) (Lactobacillus paracasei)).